The following is a 205-amino-acid chain: Outer-membrane lipoprotein carrier protein (205 aa).

The signal sequence occupies residues 1–22 (MKKIVIVISILLTSFLSSAVSA).

It belongs to the LolA family. As to quaternary structure, monomer.

The protein resides in the periplasm. Functionally, participates in the translocation of lipoproteins from the inner membrane to the outer membrane. Only forms a complex with a lipoprotein if the residue after the N-terminal Cys is not an aspartate (The Asp acts as a targeting signal to indicate that the lipoprotein should stay in the inner membrane). The sequence is that of Outer-membrane lipoprotein carrier protein from Psychromonas ingrahamii (strain DSM 17664 / CCUG 51855 / 37).